We begin with the raw amino-acid sequence, 314 residues long: Peroxidase 2 (314 aa).

Residues 1–23 form the signal peptide; sequence MASASSVSLMLLVAAAMASAASA. A Pyrrolidone carboxylic acid modification is found at Gln24. 4 cysteine pairs are disulfide-bonded: Cys34–Cys109, Cys67–Cys72, Cys115–Cys310, and Cys194–Cys219. The Proton acceptor role is filled by His65. Ca(2+)-binding residues include Asp66, Val69, Gly71, Asp73, and Ser75. N-linked (GlcNAc...) asparagine glycosylation occurs at Asn148. Pro157 serves as a coordination point for substrate. N-linked (GlcNAc...) asparagine glycosylation is present at Asn169. His187 lines the heme b pocket. Thr188 provides a ligand contact to Ca(2+). The N-linked (GlcNAc...) asparagine glycan is linked to Asn203. 3 residues coordinate Ca(2+): Asp234, Thr237, and Asp242. Residues Asn274 and Asn309 are each glycosylated (N-linked (GlcNAc...) asparagine).

The protein belongs to the peroxidase family. Classical plant (class III) peroxidase subfamily. The cofactor is Ca(2+). Heme b is required as a cofactor.

It localises to the secreted. The enzyme catalyses 2 a phenolic donor + H2O2 = 2 a phenolic radical donor + 2 H2O. Functionally, removal of H(2)O(2), oxidation of toxic reductants, biosynthesis and degradation of lignin, suberization, auxin catabolism, response to environmental stresses such as wounding, pathogen attack and oxidative stress. These functions might be dependent on each isozyme/isoform in each plant tissue. The sequence is that of Peroxidase 2 (PRX112) from Oryza sativa subsp. indica (Rice).